We begin with the raw amino-acid sequence, 156 residues long: Transcription antitermination protein NusB (156 aa).

It belongs to the NusB family.

Functionally, involved in transcription antitermination. Required for transcription of ribosomal RNA (rRNA) genes. Binds specifically to the boxA antiterminator sequence of the ribosomal RNA (rrn) operons. In Mycobacterium tuberculosis (strain CDC 1551 / Oshkosh), this protein is Transcription antitermination protein NusB.